Reading from the N-terminus, the 143-residue chain is Large ribosomal subunit protein uL13 (143 aa).

Belongs to the universal ribosomal protein uL13 family. In terms of assembly, part of the 50S ribosomal subunit.

Functionally, this protein is one of the early assembly proteins of the 50S ribosomal subunit, although it is not seen to bind rRNA by itself. It is important during the early stages of 50S assembly. The sequence is that of Large ribosomal subunit protein uL13 from Prochlorococcus marinus subsp. pastoris (strain CCMP1986 / NIES-2087 / MED4).